The chain runs to 157 residues: SUMO-conjugating enzyme UBC9-B (157 aa).

Positions 4 to 157 constitute a UBC core domain; sequence IALSRLAQER…VRAQAKKFSP (154 aa). The segment at 13–18 is interaction with SUMO1; it reads RKAWRK. The active-site Glycyl thioester intermediate is Cys93.

It belongs to the ubiquitin-conjugating enzyme family. As to quaternary structure, forms a tight complex with rangap1 and ranbp2. Interacts with vsx1.

It is found in the nucleus. It functions in the pathway protein modification; protein sumoylation. Its function is as follows. Accepts the ubiquitin-like proteins sumo1, sumo2 and sumo3 from the uble1a-uble1b E1 complex and catalyzes their covalent attachment to other proteins with the help of an E3 ligase such as ranbp2 or cbx4. Essential for nuclear architecture and chromosome segregation. Mediates nuclear localization of vsx1. Required for progression through mitosis during organogenesis. In Danio rerio (Zebrafish), this protein is SUMO-conjugating enzyme UBC9-B (ube2ib).